Here is a 340-residue protein sequence, read N- to C-terminus: Glucokinase (340 aa).

Position 17-22 (17-22 (GDIGGT)) interacts with ATP.

Belongs to the bacterial glucokinase family.

Its subcellular location is the cytoplasm. The catalysed reaction is D-glucose + ATP = D-glucose 6-phosphate + ADP + H(+). This is Glucokinase from Allorhizobium ampelinum (strain ATCC BAA-846 / DSM 112012 / S4) (Agrobacterium vitis (strain S4)).